The sequence spans 324 residues: Beta-ketoacyl-[acyl-carrier-protein] synthase III (324 aa).

Catalysis depends on residues C112 and H251. The segment at 252–256 (QANLR) is ACP-binding. N281 is an active-site residue.

The protein belongs to the thiolase-like superfamily. FabH family. Homodimer.

Its subcellular location is the cytoplasm. The enzyme catalyses malonyl-[ACP] + acetyl-CoA + H(+) = 3-oxobutanoyl-[ACP] + CO2 + CoA. Its pathway is lipid metabolism; fatty acid biosynthesis. Functionally, catalyzes the condensation reaction of fatty acid synthesis by the addition to an acyl acceptor of two carbons from malonyl-ACP. Catalyzes the first condensation reaction which initiates fatty acid synthesis and may therefore play a role in governing the total rate of fatty acid production. Possesses both acetoacetyl-ACP synthase and acetyl transacylase activities. Its substrate specificity determines the biosynthesis of branched-chain and/or straight-chain of fatty acids. The chain is Beta-ketoacyl-[acyl-carrier-protein] synthase III from Clostridium perfringens (strain ATCC 13124 / DSM 756 / JCM 1290 / NCIMB 6125 / NCTC 8237 / Type A).